Here is a 317-residue protein sequence, read N- to C-terminus: L-lactate dehydrogenase (317 aa).

NAD(+)-binding positions include valine 17, aspartate 38, lysine 43, tyrosine 69, and 83–84 (GA). 2 residues coordinate substrate: glutamine 86 and arginine 92. NAD(+)-binding positions include serine 105, 122-124 (ATN), and serine 147. 124-127 (NPVD) is a substrate binding site. 152-155 (DTAR) lines the substrate pocket. Residues arginine 157 and histidine 172 each contribute to the beta-D-fructose 1,6-bisphosphate site. The active-site Proton acceptor is the histidine 179. Position 224 is a phosphotyrosine (tyrosine 224). Residue threonine 233 coordinates substrate.

Belongs to the LDH/MDH superfamily. LDH family. Homotetramer.

The protein resides in the cytoplasm. It carries out the reaction (S)-lactate + NAD(+) = pyruvate + NADH + H(+). It participates in fermentation; pyruvate fermentation to lactate; (S)-lactate from pyruvate: step 1/1. Allosterically activated by fructose 1,6-bisphosphate (FBP). Catalyzes the conversion of lactate to pyruvate. In Bacillus caldotenax, this protein is L-lactate dehydrogenase.